The sequence spans 347 residues: 4-hydroxy-2-oxovalerate aldolase 2 (347 aa).

The region spanning 7–259 (VRITDTSLRD…KTGIDFFDIA (253 aa)) is the Pyruvate carboxyltransferase domain. Position 15–16 (15–16 (RD)) interacts with substrate. Aspartate 16 contributes to the Mn(2+) binding site. Histidine 19 (proton acceptor) is an active-site residue. Serine 169 and histidine 198 together coordinate substrate. 2 residues coordinate Mn(2+): histidine 198 and histidine 200. Residue tyrosine 289 coordinates substrate.

Belongs to the 4-hydroxy-2-oxovalerate aldolase family.

The enzyme catalyses (S)-4-hydroxy-2-oxopentanoate = acetaldehyde + pyruvate. The sequence is that of 4-hydroxy-2-oxovalerate aldolase 2 from Mycobacterium ulcerans (strain Agy99).